A 378-amino-acid chain; its full sequence is Chaperone protein DnaJ (378 aa).

The region spanning 5 to 70 (DYYEVLSVGR…DKKAAYDQFG (66 aa)) is the J domain. Residues 133–211 (GLTKELRIPT…CHGEGRVEKS (79 aa)) form a CR-type zinc finger. Residues Cys-146, Cys-149, Cys-163, Cys-166, Cys-185, Cys-188, Cys-199, and Cys-202 each contribute to the Zn(2+) site. CXXCXGXG motif repeat units follow at residues 146 to 153 (CDTCDGSG), 163 to 170 (CGTCHGQG), 185 to 192 (CPTCHGRG), and 199 to 206 (CNSCHGEG).

Belongs to the DnaJ family. Homodimer. Requires Zn(2+) as cofactor.

The protein resides in the cytoplasm. Its function is as follows. Participates actively in the response to hyperosmotic and heat shock by preventing the aggregation of stress-denatured proteins and by disaggregating proteins, also in an autonomous, DnaK-independent fashion. Unfolded proteins bind initially to DnaJ; upon interaction with the DnaJ-bound protein, DnaK hydrolyzes its bound ATP, resulting in the formation of a stable complex. GrpE releases ADP from DnaK; ATP binding to DnaK triggers the release of the substrate protein, thus completing the reaction cycle. Several rounds of ATP-dependent interactions between DnaJ, DnaK and GrpE are required for fully efficient folding. Also involved, together with DnaK and GrpE, in the DNA replication of plasmids through activation of initiation proteins. This Shewanella woodyi (strain ATCC 51908 / MS32) protein is Chaperone protein DnaJ.